Consider the following 589-residue polypeptide: Aspartate--tRNA ligase (589 aa).

Glu-175 is an L-aspartate binding site. Residues Gln-199–Lys-202 form an aspartate region. Arg-221 provides a ligand contact to L-aspartate. Residues Arg-221–Glu-223 and Gln-230 each bind ATP. L-aspartate is bound at residue His-449. Residue Glu-483 coordinates ATP. Arg-490 is a binding site for L-aspartate. ATP is bound at residue Gly-535–Arg-538.

This sequence belongs to the class-II aminoacyl-tRNA synthetase family. Type 1 subfamily. As to quaternary structure, homodimer.

The protein resides in the cytoplasm. The catalysed reaction is tRNA(Asp) + L-aspartate + ATP = L-aspartyl-tRNA(Asp) + AMP + diphosphate. In terms of biological role, catalyzes the attachment of L-aspartate to tRNA(Asp) in a two-step reaction: L-aspartate is first activated by ATP to form Asp-AMP and then transferred to the acceptor end of tRNA(Asp). The sequence is that of Aspartate--tRNA ligase from Shouchella clausii (strain KSM-K16) (Alkalihalobacillus clausii).